The primary structure comprises 283 residues: Thymidylate synthase (283 aa).

A dUMP-binding site is contributed by Arg-22. Catalysis depends on Cys-160, which acts as the Nucleophile. DUMP is bound by residues Arg-180 to Asp-183, Asn-191, and His-221 to Tyr-223. Asp-183 is a (6R)-5,10-methylene-5,6,7,8-tetrahydrofolate binding site. Residue Ser-282 coordinates (6R)-5,10-methylene-5,6,7,8-tetrahydrofolate.

The protein belongs to the thymidylate synthase family. Bacterial-type ThyA subfamily. As to quaternary structure, homodimer.

It localises to the cytoplasm. It carries out the reaction dUMP + (6R)-5,10-methylene-5,6,7,8-tetrahydrofolate = 7,8-dihydrofolate + dTMP. Its pathway is pyrimidine metabolism; dTTP biosynthesis. Functionally, catalyzes the reductive methylation of 2'-deoxyuridine-5'-monophosphate (dUMP) to 2'-deoxythymidine-5'-monophosphate (dTMP) while utilizing 5,10-methylenetetrahydrofolate (mTHF) as the methyl donor and reductant in the reaction, yielding dihydrofolate (DHF) as a by-product. This enzymatic reaction provides an intracellular de novo source of dTMP, an essential precursor for DNA biosynthesis. The chain is Thymidylate synthase from Shewanella halifaxensis (strain HAW-EB4).